Consider the following 512-residue polypeptide: Ferredoxin--nitrite reductase (512 aa).

4 residues coordinate [4Fe-4S] cluster: C396, C402, C437, and C441. C441 provides a ligand contact to siroheme.

It belongs to the nitrite and sulfite reductase 4Fe-4S domain family.

It catalyses the reaction 6 oxidized [2Fe-2S]-[ferredoxin] + NH4(+) + 2 H2O = nitrite + 6 reduced [2Fe-2S]-[ferredoxin] + 8 H(+). In Synechococcus elongatus (strain ATCC 33912 / PCC 7942 / FACHB-805) (Anacystis nidulans R2), this protein is Ferredoxin--nitrite reductase (nirA).